Consider the following 238-residue polypeptide: Ribonuclease PH (238 aa).

Phosphate-binding positions include R86 and 124–126 (GTR).

It belongs to the RNase PH family. In terms of assembly, homohexameric ring arranged as a trimer of dimers.

The enzyme catalyses tRNA(n+1) + phosphate = tRNA(n) + a ribonucleoside 5'-diphosphate. In terms of biological role, phosphorolytic 3'-5' exoribonuclease that plays an important role in tRNA 3'-end maturation. Removes nucleotide residues following the 3'-CCA terminus of tRNAs; can also add nucleotides to the ends of RNA molecules by using nucleoside diphosphates as substrates, but this may not be physiologically important. Probably plays a role in initiation of 16S rRNA degradation (leading to ribosome degradation) during starvation. This is Ribonuclease PH from Halorhodospira halophila (strain DSM 244 / SL1) (Ectothiorhodospira halophila (strain DSM 244 / SL1)).